The primary structure comprises 105 residues: N(4)-acetylcytidine amidohydrolase (105 aa).

Positions 7-93 constitute an ASCH domain; it reads TFFERFEHDI…VIAEIYPGLE (87 aa). The Proton acceptor role is filled by lysine 21. The Nucleophile role is filled by threonine 24. The active-site Proton donor is the glutamate 74.

The protein belongs to the N(4)-acetylcytidine amidohydrolase family.

It carries out the reaction N(4)-acetylcytidine + H2O = cytidine + acetate + H(+). The catalysed reaction is N(4)-acetyl-2'-deoxycytidine + H2O = 2'-deoxycytidine + acetate + H(+). It catalyses the reaction N(4)-acetylcytosine + H2O = cytosine + acetate + H(+). In terms of biological role, catalyzes the hydrolysis of N(4)-acetylcytidine (ac4C). The sequence is that of N(4)-acetylcytidine amidohydrolase from Shewanella baltica (strain OS185).